Here is a 356-residue protein sequence, read N- to C-terminus: tRNA-specific 2-thiouridylase MnmA 1 (356 aa).

ATP-binding positions include 8–15 and Met34; that span reads GMSGGVDS. Cys103 functions as the Nucleophile in the catalytic mechanism. Cysteines 103 and 199 form a disulfide. Gly127 contacts ATP. An interaction with tRNA region spans residues 149–151; sequence KDQ. Residue Cys199 is the Cysteine persulfide intermediate of the active site. The tract at residues 305-306 is interaction with tRNA; it reads RY.

Belongs to the MnmA/TRMU family.

The protein resides in the cytoplasm. The catalysed reaction is S-sulfanyl-L-cysteinyl-[protein] + uridine(34) in tRNA + AH2 + ATP = 2-thiouridine(34) in tRNA + L-cysteinyl-[protein] + A + AMP + diphosphate + H(+). Its function is as follows. Catalyzes the 2-thiolation of uridine at the wobble position (U34) of tRNA, leading to the formation of s(2)U34. In Clostridium botulinum (strain Langeland / NCTC 10281 / Type F), this protein is tRNA-specific 2-thiouridylase MnmA 1.